Here is a 588-residue protein sequence, read N- to C-terminus: Succinate dehydrogenase flavoprotein subunit (588 aa).

FAD-binding positions include G14 to G19, S37 to G52, and D221. H45 carries the post-translational modification Tele-8alpha-FAD histidine. Substrate contacts are provided by H242 and T254. N6-acetyllysine is present on K267. The Proton acceptor role is filled by R286. H354 is a substrate binding site. Residue E388 coordinates FAD. R399 contacts substrate. S404–L405 lines the FAD pocket.

The protein belongs to the FAD-dependent oxidoreductase 2 family. FRD/SDH subfamily. As to quaternary structure, part of an enzyme complex containing four subunits: a flavoprotein, an iron-sulfur, cytochrome b-556, and a hydrophobic anchor protein. The complex forms trimers. The cofactor is FAD.

It localises to the cell inner membrane. The catalysed reaction is a quinone + succinate = fumarate + a quinol. The protein operates within carbohydrate metabolism; tricarboxylic acid cycle; fumarate from succinate (bacterial route): step 1/1. Its function is as follows. Two distinct, membrane-bound, FAD-containing enzymes are responsible for the catalysis of fumarate and succinate interconversion; the fumarate reductase is used in anaerobic growth, and the succinate dehydrogenase is used in aerobic growth. The sequence is that of Succinate dehydrogenase flavoprotein subunit (sdhA) from Escherichia coli O157:H7.